We begin with the raw amino-acid sequence, 474 residues long: 3-isopropylmalate dehydratase large subunit (474 aa).

A disordered region spans residues 293 to 313; that stretch reads GTTPGQGIGITEEIPAPEDLP. [4Fe-4S] cluster is bound by residues Cys-348, Cys-408, and Cys-411.

This sequence belongs to the aconitase/IPM isomerase family. LeuC type 1 subfamily. In terms of assembly, heterodimer of LeuC and LeuD. [4Fe-4S] cluster serves as cofactor.

The catalysed reaction is (2R,3S)-3-isopropylmalate = (2S)-2-isopropylmalate. It participates in amino-acid biosynthesis; L-leucine biosynthesis; L-leucine from 3-methyl-2-oxobutanoate: step 2/4. Its function is as follows. Catalyzes the isomerization between 2-isopropylmalate and 3-isopropylmalate, via the formation of 2-isopropylmaleate. In Natronomonas pharaonis (strain ATCC 35678 / DSM 2160 / CIP 103997 / JCM 8858 / NBRC 14720 / NCIMB 2260 / Gabara) (Halobacterium pharaonis), this protein is 3-isopropylmalate dehydratase large subunit.